We begin with the raw amino-acid sequence, 405 residues long: CCA-adding enzyme (405 aa).

ATP is bound by residues Gly8 and Arg11. Residues Gly8 and Arg11 each contribute to the CTP site. Mg(2+) is bound by residues Glu21 and Asp23. ATP is bound by residues Arg91, Arg137, and Arg140. CTP contacts are provided by Arg91, Arg137, and Arg140. Residues 220–326 (PLSHGLSTLS…LNFFDELDLW (107 aa)) enclose the HD domain.

It belongs to the tRNA nucleotidyltransferase/poly(A) polymerase family. Bacterial CCA-adding enzyme type 2 subfamily. Requires Mg(2+) as cofactor.

It carries out the reaction a tRNA precursor + 2 CTP + ATP = a tRNA with a 3' CCA end + 3 diphosphate. The catalysed reaction is a tRNA with a 3' CCA end + 2 CTP + ATP = a tRNA with a 3' CCACCA end + 3 diphosphate. Catalyzes the addition and repair of the essential 3'-terminal CCA sequence in tRNAs without using a nucleic acid template. Adds these three nucleotides in the order of C, C, and A to the tRNA nucleotide-73, using CTP and ATP as substrates and producing inorganic pyrophosphate. tRNA 3'-terminal CCA addition is required both for tRNA processing and repair. Also involved in tRNA surveillance by mediating tandem CCA addition to generate a CCACCA at the 3' terminus of unstable tRNAs. While stable tRNAs receive only 3'-terminal CCA, unstable tRNAs are marked with CCACCA and rapidly degraded. The polypeptide is CCA-adding enzyme (Hamiltonella defensa subsp. Acyrthosiphon pisum (strain 5AT)).